Consider the following 379-residue polypeptide: F-box protein At1g30200 (379 aa).

Residues 24–72 (DHFDLLPDSLLLLIFDKVADVKDLGRCCIVSRRFHSLVPFVENVLVRVD) form the F-box domain.

This Arabidopsis thaliana (Mouse-ear cress) protein is F-box protein At1g30200.